Here is a 400-residue protein sequence, read N- to C-terminus: Nicotinate phosphoribosyltransferase (400 aa).

Phosphohistidine; by autocatalysis is present on His-220.

The protein belongs to the NAPRTase family. In terms of processing, transiently phosphorylated on a His residue during the reaction cycle. Phosphorylation strongly increases the affinity for substrates and increases the rate of nicotinate D-ribonucleotide production. Dephosphorylation regenerates the low-affinity form of the enzyme, leading to product release.

It catalyses the reaction nicotinate + 5-phospho-alpha-D-ribose 1-diphosphate + ATP + H2O = nicotinate beta-D-ribonucleotide + ADP + phosphate + diphosphate. The protein operates within cofactor biosynthesis; NAD(+) biosynthesis; nicotinate D-ribonucleotide from nicotinate: step 1/1. Catalyzes the synthesis of beta-nicotinate D-ribonucleotide from nicotinate and 5-phospho-D-ribose 1-phosphate at the expense of ATP. The protein is Nicotinate phosphoribosyltransferase of Escherichia coli O157:H7.